A 246-amino-acid polypeptide reads, in one-letter code: Endonuclease NucS (246 aa).

The protein belongs to the NucS endonuclease family.

It localises to the cytoplasm. Its function is as follows. Cleaves both 3' and 5' ssDNA extremities of branched DNA structures. This Corynebacterium urealyticum (strain ATCC 43042 / DSM 7109) protein is Endonuclease NucS.